The sequence spans 407 residues: B3 domain-containing protein Os07g0183200 (407 aa).

Residues phenylalanine 124–arginine 227 constitute a DNA-binding region (TF-B3).

It is found in the nucleus. The protein is B3 domain-containing protein Os07g0183200 of Oryza sativa subsp. japonica (Rice).